A 257-amino-acid polypeptide reads, in one-letter code: Type III pantothenate kinase (257 aa).

Residue 11–18 participates in ATP binding; sequence DSGNTAIK. Residues Y96 and 103–106 contribute to the substrate site; that span reads GCDR. The active-site Proton acceptor is the D105. D125 lines the K(+) pocket. An ATP-binding site is contributed by T128. Position 179 (T179) interacts with substrate.

It belongs to the type III pantothenate kinase family. Homodimer. NH4(+) serves as cofactor. It depends on K(+) as a cofactor.

It localises to the cytoplasm. The catalysed reaction is (R)-pantothenate + ATP = (R)-4'-phosphopantothenate + ADP + H(+). Its pathway is cofactor biosynthesis; coenzyme A biosynthesis; CoA from (R)-pantothenate: step 1/5. Catalyzes the phosphorylation of pantothenate (Pan), the first step in CoA biosynthesis. The polypeptide is Type III pantothenate kinase (Nitrosomonas eutropha (strain DSM 101675 / C91 / Nm57)).